The chain runs to 286 residues: Ribosomal RNA small subunit methyltransferase A (286 aa).

Positions 33, 35, 60, 81, 111, and 129 each coordinate S-adenosyl-L-methionine.

Belongs to the class I-like SAM-binding methyltransferase superfamily. rRNA adenine N(6)-methyltransferase family. RsmA subfamily.

The protein localises to the cytoplasm. The enzyme catalyses adenosine(1518)/adenosine(1519) in 16S rRNA + 4 S-adenosyl-L-methionine = N(6)-dimethyladenosine(1518)/N(6)-dimethyladenosine(1519) in 16S rRNA + 4 S-adenosyl-L-homocysteine + 4 H(+). In terms of biological role, specifically dimethylates two adjacent adenosines (A1518 and A1519) in the loop of a conserved hairpin near the 3'-end of 16S rRNA in the 30S particle. May play a critical role in biogenesis of 30S subunits. This chain is Ribosomal RNA small subunit methyltransferase A, found in Streptomyces coelicolor (strain ATCC BAA-471 / A3(2) / M145).